Consider the following 195-residue polypeptide: uncharacterized protein (195 aa).

2 helical membrane-spanning segments follow: residues 13-32 (VIGL…FLVA) and 42-64 (LSNS…TILV).

It is found in the cell membrane. This is an uncharacterized protein from Archaeoglobus fulgidus (strain ATCC 49558 / DSM 4304 / JCM 9628 / NBRC 100126 / VC-16).